We begin with the raw amino-acid sequence, 185 residues long: Putative manganese efflux pump MntP (185 aa).

6 consecutive transmembrane segments (helical) span residues Pro-3–Gly-23, Ala-41–Ala-61, His-70–Trp-90, Ser-101–Val-121, Leu-123–Leu-143, and Ala-165–Ala-185.

It belongs to the MntP (TC 9.B.29) family.

It localises to the cell inner membrane. Functionally, probably functions as a manganese efflux pump. The polypeptide is Putative manganese efflux pump MntP (Bradyrhizobium sp. (strain BTAi1 / ATCC BAA-1182)).